Here is a 532-residue protein sequence, read N- to C-terminus: Drimenyl diphosphate synthase (532 aa).

(2E,6E)-farnesyl diphosphate-binding residues include Arg121, Lys122, Gln152, and Trp154. Glu158 provides a ligand contact to Mg(2+). 4 PFTB repeats span residues 275 to 317 (PAAM…RVAG), 325 to 367 (IAAA…APNP), 428 to 469 (KRQA…SRDG), and 475 to 518 (LARA…CVLL). The active-site Proton donor is Asp304. A (2E,6E)-farnesyl diphosphate-binding site is contributed by Arg502.

It belongs to the terpene cyclase/mutase family. Mg(2+) is required as a cofactor. Requires Ni(2+) as cofactor. The cofactor is Co(2+).

The enzyme catalyses (2E,6E)-farnesyl diphosphate = (5S,9S,10S)-drim-7-en-11-yl diphosphate. Catalyzes the cyclization of farnesyl diphosphate (FPP) to drimenyl diphosphate. This Streptantibioticus cattleyicolor (strain ATCC 35852 / DSM 46488 / JCM 4925 / NBRC 14057 / NRRL 8057) (Streptomyces cattleya) protein is Drimenyl diphosphate synthase.